The sequence spans 571 residues: MTIEALADVVRLHPELALFAAIVFGHFIGKIEIRKVSLGTVVGTLIAGMILGLLFEPEIPDLLKWAFFDLFLFAVGYSAGPQFFASLKREALPQMALAVVVSCTGLAAAIAMVALFRFDPGLSAGLVSGSMTQSAALGSALSAIAAMDVDEATRALLTAHAPLADATTYIFGEVGLILFVTVVAPRLLKVDLRQVAREAEAELQARTDEDDAALWDQAPLSLRTYRLENAELDQRTVHEFERRYAAGRLTVTGIRRGDQLLRDVGADARLALGDIVLVASRRAGVVGAALEVGTEVDDQELLSEPMVRASIVLTRREMAGKTLGELARGAARGLFLDSLHRGESTLPRAMGTRVQRGDVFKLTGSRAAIATAARNLGFIEHDQGRTDLVYLAGGVVVGILFGLLQVRLTGVPLGLGTSGGVLVVGLVAGWLYSRYPVVGHIPEPALRLLSDVGLIVFIAAIGLAAGPHAVQAIHEGGIALFAKLVGAGVVVTLAGPIAGLLLGHYVLKLPPIALLPGIAGAQTTVATLNALKERGGSDVYAIGFTVPFAVSNVLITLWGPVIVACAVALSR.

5 helical membrane-spanning segments follow: residues 10-29, 36-55, 65-87, 96-118, and 166-188; these read VRLH…HFIG, VSLG…GLLF, WAFF…FASL, ALAV…LFRF, and ATTY…PRLL. An RCK C-terminal domain is found at 294–378; that stretch reads TEVDDQELLS…IATAARNLGF (85 aa). Transmembrane regions (helical) follow at residues 388-406, 411-433, 446-465, 480-502, 509-531, and 546-568; these read LVYL…LLQV, VPLG…WLYS, LRLL…GLAA, LFAK…GLLL, LPPI…LNAL, and VPFA…CAVA.

The protein belongs to the AAE transporter (TC 2.A.81) family.

The protein resides in the cell membrane. This is an uncharacterized protein from Bordetella bronchiseptica (strain ATCC BAA-588 / NCTC 13252 / RB50) (Alcaligenes bronchisepticus).